A 233-amino-acid chain; its full sequence is Coproporphyrinogen-III oxidase 2, chloroplastic (233 aa).

A chloroplast-targeting transit peptide spans 1–48; that stretch reads MASHSSTLFTSPSSFILFSSHRLKSSPNYFTYHFPRSVKRPHFDLRCS. Position 174 (serine 174) interacts with substrate. Histidine 188 (proton donor) is an active-site residue.

It belongs to the aerobic coproporphyrinogen-III oxidase family. Homodimer.

The protein localises to the plastid. Its subcellular location is the chloroplast. It carries out the reaction coproporphyrinogen III + O2 + 2 H(+) = protoporphyrinogen IX + 2 CO2 + 2 H2O. It functions in the pathway porphyrin-containing compound metabolism; protoporphyrin-IX biosynthesis; protoporphyrinogen-IX from coproporphyrinogen-III (O2 route): step 1/1. The protein operates within porphyrin-containing compound metabolism; chlorophyll biosynthesis. Key enzyme in heme biosynthesis. Catalyzes the oxidative decarboxylation of propionic acid side chains of rings A and B of coproporphyrinogen III. The protein is Coproporphyrinogen-III oxidase 2, chloroplastic (CPX2) of Arabidopsis thaliana (Mouse-ear cress).